Reading from the N-terminus, the 274-residue chain is Acetylaranotin bis-thiomethyltransferase (274 aa).

The protein belongs to the class I-like SAM-binding methyltransferase superfamily.

The protein operates within mycotoxin biosynthesis. Its function is as follows. Acetylaranotin bis-thiomethyltransferase involved in the biosynthesis of acetylaranotin derivatives, members of the epipolythiodioxopiperazine (ETP) class of toxins characterized by a disulfide-bridged cyclic dipeptide. The first step of acetylaranotin biosynthesis is performed by the NRPS ataP which produces diketopiperazine cyclo-L-Phe-L-Phe via the condensation of 2 phenylalanines (L-Phe). The ataC domain of ataTC then catalyzes the formation of bishydroxylation of cyclo-L-Phe-L-Phe. The glutathione S-transferase domain ataG in ataIMG further catalyzes the conjugation of two glutathiones to the bishydroxylated intermediate. Next, the dipeptidase ataJ removes the Glu residues. The following step is performed by the carbon sulfur lyase domain ataI of ataIMG which may convert the bis-cysteinyl adduct to yield an epidithiol intermediate. The ataT domain from ataTC then catalyzes the oxidation of the free dithiols, followed by a cyclization step catalyzed by the cytochrome P450 ataF. AtaF probably acts as an epoxidase to promote a dual epoxidation formation at C8 and C9 along with C8' and C9', followed by the spontaneous nucleophilic attack of the amide nitrogens N10 and N10' to yield an intermediate with the pyrrolidine partial structure. The final steps of acetylaranotin biosynthesis involve the acetylation and ring rearrangement of an epitetrathiodiketopiperazine intermediate to produce acetylaranotin. AtaH probably catalyzes the acetylation of epitetrathiodiketopiperazine to produce a diacetate and ataY is responsible for the formation of the dihydrooxepin moiety that converts the diacetate intermediate to acetylaranotin via acetylapoaranotin. Both enzymes could function independently in the absence of the other. The acetylaranotin bis-thiomethyltransferase ataS located outside of acetylaranotin gene cluster is the main thiomethyltransferase responsible for converting acetylaranotin and its related intermediates to their methylated forms. This chain is Acetylaranotin bis-thiomethyltransferase, found in Aspergillus terreus (strain NIH 2624 / FGSC A1156).